The following is a 252-amino-acid chain: Putative endonuclease C1F12.06c (252 aa).

Mg(2+) contacts are provided by Asp43 and Asp114.

Belongs to the endonuclease V family.

It localises to the cytoplasm. The protein resides in the nucleus. In Schizosaccharomyces pombe (strain 972 / ATCC 24843) (Fission yeast), this protein is Putative endonuclease C1F12.06c.